The primary structure comprises 231 residues: Orotidine 5'-phosphate decarboxylase (231 aa).

Substrate contacts are provided by residues aspartate 11, lysine 33, 60 to 69 (DLKFHDIPNT), threonine 120, arginine 181, glutamine 190, glycine 210, and arginine 211. Lysine 62 serves as the catalytic Proton donor.

Belongs to the OMP decarboxylase family. Type 1 subfamily. Homodimer.

It carries out the reaction orotidine 5'-phosphate + H(+) = UMP + CO2. It participates in pyrimidine metabolism; UMP biosynthesis via de novo pathway; UMP from orotate: step 2/2. Functionally, catalyzes the decarboxylation of orotidine 5'-monophosphate (OMP) to uridine 5'-monophosphate (UMP). The polypeptide is Orotidine 5'-phosphate decarboxylase (Vibrio cholerae serotype O1 (strain ATCC 39315 / El Tor Inaba N16961)).